The following is a 171-amino-acid chain: Shikimate kinase (171 aa).

Residue 14–19 (GAGKST) participates in ATP binding. S18 contacts Mg(2+). Positions 36, 60, and 82 each coordinate substrate. R120 contributes to the ATP binding site. R139 lines the substrate pocket. Residue Q156 coordinates ATP.

It belongs to the shikimate kinase family. Monomer. Mg(2+) serves as cofactor.

Its subcellular location is the cytoplasm. It catalyses the reaction shikimate + ATP = 3-phosphoshikimate + ADP + H(+). The protein operates within metabolic intermediate biosynthesis; chorismate biosynthesis; chorismate from D-erythrose 4-phosphate and phosphoenolpyruvate: step 5/7. In terms of biological role, catalyzes the specific phosphorylation of the 3-hydroxyl group of shikimic acid using ATP as a cosubstrate. In Shewanella loihica (strain ATCC BAA-1088 / PV-4), this protein is Shikimate kinase.